A 450-amino-acid chain; its full sequence is MDHQDPYSVQATAAIAAAITFLILFTIFGNALVILAVLTSRSLRAPQNLFLVSLAAADILVATLIIPFSLANELLGYWYFRRTWCEVYLALDVLFCTSSIVHLCAISLDRYWAVSRALEYNSKRTPRRIKCIILTVWLIAAVISLPPLIYKGDQGPQPRGRPQCKLNQEAWYILASSIGSFFAPCLIMILVYLRIYLIAKRSNRRGPRAKGGPGQGESKQPRPDHGGALASAKLPALASVASAREVNGHSKSTGEKEEGETPEDTGTRALPPSWAALPNSGQGQKEGVCGASPEDEAEEEEEEEEEEEECEPQAVPVSPASACSPPLQQPQGSRVLATLRGQVLLGRGVGAIGGQWWRRRAQLTREKRFTFVLAVVIGVFVLCWFPFFFSYSLGAICPKHCKVPHGLFQFFFWIGYCNSSLNPVIYTIFNQDFRRAFRRILCRPWTQTAW.

Topologically, residues 1 to 12 are extracellular; it reads MDHQDPYSVQAT. A helical membrane pass occupies residues 13–38; that stretch reads AAIAAAITFLILFTIFGNALVILAVL. Topologically, residues 39–48 are cytoplasmic; it reads TSRSLRAPQN. Residues 49 to 69 form a helical membrane-spanning segment; the sequence is LFLVSLAAADILVATLIIPFS. The Extracellular segment spans residues 70-86; that stretch reads LANELLGYWYFRRTWCE. Cys85 and Cys164 are disulfide-bonded. Residues 87–107 traverse the membrane as a helical segment; it reads VYLALDVLFCTSSIVHLCAIS. The Cytoplasmic portion of the chain corresponds to 108 to 128; that stretch reads LDRYWAVSRALEYNSKRTPRR. Residues 129–149 traverse the membrane as a helical segment; sequence IKCIILTVWLIAAVISLPPLI. Over 150 to 172 the chain is Extracellular; sequence YKGDQGPQPRGRPQCKLNQEAWY. A helical membrane pass occupies residues 173 to 193; that stretch reads ILASSIGSFFAPCLIMILVYL. The Cytoplasmic segment spans residues 194–368; sequence RIYLIAKRSN…RRAQLTREKR (175 aa). Disordered stretches follow at residues 204–229 and 241–329; these read RRGPRAKGGPGQGESKQPRPDHGGAL and ASAR…PLQQ. Positions 246-256 are enriched in basic and acidic residues; that stretch reads VNGHSKSTGEK. The segment covering 293-311 has biased composition (acidic residues); the sequence is PEDEAEEEEEEEEEEEECE. Low complexity predominate over residues 312–326; it reads PQAVPVSPASACSPP. The helical transmembrane segment at 369–389 threads the bilayer; sequence FTFVLAVVIGVFVLCWFPFFF. Residues 390 to 405 are Extracellular-facing; that stretch reads SYSLGAICPKHCKVPH. Residues 406 to 426 traverse the membrane as a helical segment; that stretch reads GLFQFFFWIGYCNSSLNPVIY. Residues 427 to 450 are Cytoplasmic-facing; that stretch reads TIFNQDFRRAFRRILCRPWTQTAW. Cys442 carries the S-palmitoyl cysteine lipid modification.

The protein belongs to the G-protein coupled receptor 1 family. Adrenergic receptor subfamily. ADRA2B sub-subfamily. In terms of assembly, interacts with RAB26. Interacts with PPP1R9B. Interacts with GGA1, GGA2 and GGA3.

It localises to the cell membrane. Functionally, alpha-2 adrenergic receptors mediate the catecholamine-induced inhibition of adenylate cyclase through the action of G proteins. The rank order of potency for agonists of this receptor is clonidine &gt; norepinephrine &gt; epinephrine = oxymetazoline &gt; dopamine &gt; p-tyramine = phenylephrine &gt; serotonin &gt; p-synephrine / p-octopamine. For antagonists, the rank order is yohimbine &gt; chlorpromazine &gt; phentolamine &gt; mianserine &gt; spiperone &gt; prazosin &gt; alprenolol &gt; propanolol &gt; pindolol. The chain is Alpha-2B adrenergic receptor (ADRA2B) from Homo sapiens (Human).